A 785-amino-acid polypeptide reads, in one-letter code: MSWVMVSPELVVAAAADLAGIGSAISSANAAAAVNTTGLLTAGADEVSTAIAALFGAQGQAYQAASAQAAAFYAQFVQALSAGGGAYAAAEAAAVSPLLAPINAQFVAATGRPLIGNGANGAPGTGANGGPGGWLIGNGGAGGSGAPGAGAGGNGGAGGLFGSGGAGGASTDVAGGAGGAGGAGGNASMLFGAAGVGGVGGFSNGGATGGAGGAGGAGGLFGAGGEGGSGGSGNLTGGAGGAGGNAGTLATGDGGAGGTGGASRSGGFGGAGGAGGDAGMFFGSGGSGGAGGISRSVGDGAAGGAGGAPGLIGNGGNGGNGGASTGGGDGGPGGAGGIGVLIGNGGNGGXGGTGATLGKAGIGGTGGVLLGLDGFTPPASTSPLHTLQQDVINMVNDPFQTLTGRPLIGNGANGTPGTGADGGAGGWLFGNGGNGGQGTIGGVNGGAGGAGGAGGILFGTGGTGGSGGPGATGLGGIGGAGGAALLFGSGGAGGSGGAGAVGGNGGAGGNAGALLGAAGAGGAGGAGAVGGNGGAGGNGGLFANGGAGGPGGFGSPAGAGGIGGAGGNGGLFGAGGAGGNGGLFGAGGTGGAGSHSTAAGVSGGAGGAGGDAGLLSLGASGGAGGSGGSSLTAAGVVGGIGGAGGLLFGSGGAGGSGGFSNSGNGGAGGAGGDAGLLVGSGGAGGAGASATGAATGGDGGAGGKSGAFGLGGDGGAGGATGLSGAFHIGGKGGVGGSAVLIGNGGNGGNGGNSGNAGKSGGAPGPSGAGGAGGLLLGENGLNGLM.

Residues 1 to 93 (MSWVMVSPEL…GGAYAAAEAA (93 aa)) enclose the PE domain.

The protein belongs to the mycobacterial PE family. PGRS subfamily.

This is an uncharacterized protein from Mycobacterium tuberculosis (strain CDC 1551 / Oshkosh).